The chain runs to 105 residues: Acylphosphatase (105 aa).

The region spanning 16–105 (RLTAWVRGRV…RGGYSGFTQA (90 aa)) is the Acylphosphatase-like domain. Active-site residues include R31 and N49.

The protein belongs to the acylphosphatase family.

It catalyses the reaction an acyl phosphate + H2O = a carboxylate + phosphate + H(+). The protein is Acylphosphatase (acyP) of Acidothermus cellulolyticus (strain ATCC 43068 / DSM 8971 / 11B).